Here is a 520-residue protein sequence, read N- to C-terminus: Phospholipase C A (520 aa).

Positions 1-38 (MSASPLLGMSRREFLTKLTGAGAAAFLMDWAAPVIEKA) form a signal peptide, tat-type signal.

The protein belongs to the bacterial phospholipase C family. Post-translationally, predicted to be exported by the Tat system. The position of the signal peptide cleavage has not been experimentally proven.

The protein resides in the secreted. It localises to the cell wall. It carries out the reaction a 1,2-diacyl-sn-glycero-3-phosphocholine + H2O = phosphocholine + a 1,2-diacyl-sn-glycerol + H(+). In terms of biological role, involved in virulence. Induces cytotoxic effects on mouse macrophage cell lines, via direct or indirect enzymatic hydrolysis of cell membrane phospholipids. Hydrolyzes phosphatidylcholine. The polypeptide is Phospholipase C A (Mycobacterium tuberculosis (strain CDC 1551 / Oshkosh)).